Consider the following 1142-residue polypeptide: Error-prone DNA polymerase (1142 aa).

Residues Thr291–Arg361 form a disordered region. 2 stretches are compositionally biased toward low complexity: residues Leu311 to Pro320 and Gly327 to Pro344. Positions Gly345 to Ala355 are enriched in gly residues.

The protein belongs to the DNA polymerase type-C family. DnaE2 subfamily.

It localises to the cytoplasm. It catalyses the reaction DNA(n) + a 2'-deoxyribonucleoside 5'-triphosphate = DNA(n+1) + diphosphate. DNA polymerase involved in damage-induced mutagenesis and translesion synthesis (TLS). It is not the major replicative DNA polymerase. The sequence is that of Error-prone DNA polymerase from Anaeromyxobacter dehalogenans (strain 2CP-1 / ATCC BAA-258).